The following is a 226-amino-acid chain: tRNA (guanine-N(1)-)-methyltransferase (226 aa).

Residues Gly112 and 132 to 137 (IGDYVL) each bind S-adenosyl-L-methionine.

The protein belongs to the RNA methyltransferase TrmD family. As to quaternary structure, homodimer.

The protein resides in the cytoplasm. It carries out the reaction guanosine(37) in tRNA + S-adenosyl-L-methionine = N(1)-methylguanosine(37) in tRNA + S-adenosyl-L-homocysteine + H(+). Its function is as follows. Specifically methylates guanosine-37 in various tRNAs. This Flavobacterium johnsoniae (strain ATCC 17061 / DSM 2064 / JCM 8514 / BCRC 14874 / CCUG 350202 / NBRC 14942 / NCIMB 11054 / UW101) (Cytophaga johnsonae) protein is tRNA (guanine-N(1)-)-methyltransferase.